A 334-amino-acid chain; its full sequence is Sulfhydrogenase 2 subunit beta (334 aa).

2 consecutive 4Fe-4S ferredoxin-type domains span residues Lys220–Thr250 and Cys294–Glu328. [4Fe-4S] cluster contacts are provided by Cys229, Cys232, Cys235, Cys239, Cys306, Cys309, Cys312, and Cys316.

In terms of assembly, dimer of heterotetramer of alpha, beta, gamma and delta subunits. The nickel-containing alpha and delta subunits constitute the hydrogenase activity. The beta and gamma subunits (flavin-containing dimer) constitute the sulfur reductase activity. [4Fe-4S] cluster is required as a cofactor.

It is found in the cytoplasm. The enzyme catalyses n sulfur + H2 = (n-1) sulfur + hydrogen sulfide + H(+). In terms of biological role, part of a bifunctional enzyme complex that functions as a hydrogen-evolving hydrogenase with sulfur-reducing activity. May play a role in hydrogen cycling during fermentative growth. Activity exhibited with NAD in addition to NADPH. The beta and gamma subunits form the sulfur-reducing component that catalyzes the cytoplasmic production of hydrogen sulfide in the presence of elemental sulfur. This chain is Sulfhydrogenase 2 subunit beta, found in Pyrococcus furiosus (strain ATCC 43587 / DSM 3638 / JCM 8422 / Vc1).